We begin with the raw amino-acid sequence, 160 residues long: Cytochrome c-type biogenesis protein CcmE (160 aa).

Over 1–8 the chain is Cytoplasmic; it reads MSAPRKTR. The chain crosses the membrane as a helical; Signal-anchor for type II membrane protein span at residues 9–29; sequence LYAILAVICGAVLTVALTLYA. The Periplasmic portion of the chain corresponds to 30–160; sequence LSSNIDLFYT…PAAVTEGKRL (131 aa). Positions 130 and 134 each coordinate heme.

Belongs to the CcmE/CycJ family.

Its subcellular location is the cell inner membrane. Heme chaperone required for the biogenesis of c-type cytochromes. Transiently binds heme delivered by CcmC and transfers the heme to apo-cytochromes in a process facilitated by CcmF and CcmH. In Pectobacterium carotovorum subsp. carotovorum (strain PC1), this protein is Cytochrome c-type biogenesis protein CcmE.